A 302-amino-acid polypeptide reads, in one-letter code: Dehydrodolichyl diphosphate synthase 3 (302 aa).

This sequence belongs to the UPP synthase family. It depends on Mg(2+) as a cofactor.

It participates in protein modification; protein glycosylation. In terms of biological role, catalyzes cis-prenyl chain elongation to produce the polyprenyl backbone of dolichol, a glycosyl carrier-lipid required for the biosynthesis of several classes of glycoprotein. In Arabidopsis thaliana (Mouse-ear cress), this protein is Dehydrodolichyl diphosphate synthase 3.